The chain runs to 254 residues: CDP-diacylglycerol pyrophosphatase (254 aa).

Residues 6–26 (YFLLALLVAILAALAGGYYWL) form a helical membrane-spanning segment.

Belongs to the Cdh family.

It localises to the cell inner membrane. It catalyses the reaction a CDP-1,2-diacyl-sn-glycerol + H2O = a 1,2-diacyl-sn-glycero-3-phosphate + CMP + 2 H(+). It participates in phospholipid metabolism; CDP-diacylglycerol degradation; phosphatidate from CDP-diacylglycerol: step 1/1. The sequence is that of CDP-diacylglycerol pyrophosphatase from Klebsiella pneumoniae (strain 342).